Reading from the N-terminus, the 49-residue chain is Sperm protamine P1 (49 aa).

This sequence belongs to the protamine P1 family. In terms of tissue distribution, testis.

Its subcellular location is the nucleus. The protein localises to the chromosome. Functionally, protamines substitute for histones in the chromatin of sperm during the haploid phase of spermatogenesis. They compact sperm DNA into a highly condensed, stable and inactive complex. This is Sperm protamine P1 (PRM1) from Rhinopoma hardwickii (Lesser mouse-tailed bat).